The chain runs to 431 residues: D-inositol 3-phosphate glycosyltransferase (431 aa).

H14 lines the 1D-myo-inositol 3-phosphate pocket. UDP-N-acetyl-alpha-D-glucosamine is bound by residues 20 to 21 and G28; that span reads QP. 1D-myo-inositol 3-phosphate contacts are provided by residues 25-30, K83, Y116, T140, and R160; that span reads DAGGMN. Residues R240 and K245 each contribute to the UDP-N-acetyl-alpha-D-glucosamine site. Y315, R316, and A318 together coordinate Mg(2+). UDP-N-acetyl-alpha-D-glucosamine-binding residues include E328 and E336. Residue T342 participates in Mg(2+) binding.

It belongs to the glycosyltransferase group 1 family. MshA subfamily. As to quaternary structure, homodimer.

The enzyme catalyses 1D-myo-inositol 3-phosphate + UDP-N-acetyl-alpha-D-glucosamine = 1D-myo-inositol 2-acetamido-2-deoxy-alpha-D-glucopyranoside 3-phosphate + UDP + H(+). Functionally, catalyzes the transfer of a N-acetyl-glucosamine moiety to 1D-myo-inositol 3-phosphate to produce 1D-myo-inositol 2-acetamido-2-deoxy-glucopyranoside 3-phosphate in the mycothiol biosynthesis pathway. This chain is D-inositol 3-phosphate glycosyltransferase, found in Thermomonospora curvata (strain ATCC 19995 / DSM 43183 / JCM 3096 / KCTC 9072 / NBRC 15933 / NCIMB 10081 / Henssen B9).